The following is a 594-amino-acid chain: UvrABC system protein C (594 aa).

The GIY-YIG domain occupies 14 to 91 (DKPGCYLMKD…IKKHDPKYNV (78 aa)). Residues 196–231 (SDIKEQLRERMEKAAEDLDFERAKELRDTIAQMEKV) enclose the UVR domain.

Belongs to the UvrC family. As to quaternary structure, interacts with UvrB in an incision complex.

Its subcellular location is the cytoplasm. The UvrABC repair system catalyzes the recognition and processing of DNA lesions. UvrC both incises the 5' and 3' sides of the lesion. The N-terminal half is responsible for the 3' incision and the C-terminal half is responsible for the 5' incision. The protein is UvrABC system protein C of Shouchella clausii (strain KSM-K16) (Alkalihalobacillus clausii).